A 338-amino-acid chain; its full sequence is RNA 3'-terminal phosphate cyclase (338 aa).

ATP contacts are provided by residues glutamine 103 and 283 to 287 (YLADQ). The Tele-AMP-histidine intermediate role is filled by histidine 308.

The protein belongs to the RNA 3'-terminal cyclase family. Type 1 subfamily.

It localises to the cytoplasm. It carries out the reaction a 3'-end 3'-phospho-ribonucleotide-RNA + ATP = a 3'-end 2',3'-cyclophospho-ribonucleotide-RNA + AMP + diphosphate. In terms of biological role, catalyzes the conversion of 3'-phosphate to a 2',3'-cyclic phosphodiester at the end of RNA. The mechanism of action of the enzyme occurs in 3 steps: (A) adenylation of the enzyme by ATP; (B) transfer of adenylate to an RNA-N3'P to produce RNA-N3'PP5'A; (C) and attack of the adjacent 2'-hydroxyl on the 3'-phosphorus in the diester linkage to produce the cyclic end product. The biological role of this enzyme is unknown but it is likely to function in some aspects of cellular RNA processing. The chain is RNA 3'-terminal phosphate cyclase from Escherichia coli O7:K1 (strain IAI39 / ExPEC).